The chain runs to 126 residues: Small ribosomal subunit protein uS13 (126 aa).

A disordered region spans residues 95-126 (NLPVHGQRTHTNARTRKGPRRAIAGKKKAGKK).

This sequence belongs to the universal ribosomal protein uS13 family. As to quaternary structure, part of the 30S ribosomal subunit. Forms a loose heterodimer with protein S19. Forms two bridges to the 50S subunit in the 70S ribosome.

Functionally, located at the top of the head of the 30S subunit, it contacts several helices of the 16S rRNA. In the 70S ribosome it contacts the 23S rRNA (bridge B1a) and protein L5 of the 50S subunit (bridge B1b), connecting the 2 subunits; these bridges are implicated in subunit movement. Contacts the tRNAs in the A and P-sites. In Frankia casuarinae (strain DSM 45818 / CECT 9043 / HFP020203 / CcI3), this protein is Small ribosomal subunit protein uS13.